Consider the following 645-residue polypeptide: UPF0313 protein CLK_3381 (645 aa).

Residues 295–566 (AIKEVKFSIT…RMQRALLQFS (272 aa)) form the Radical SAM core domain. [4Fe-4S] cluster is bound by residues Cys309, Cys313, and Cys316. Positions 598–645 (NKPYKKSHKKNNVKNNNNHYNKNNNYNKNKDVSKKNKKNSLSKHKKRK) are disordered. Positions 600–609 (PYKKSHKKNN) are enriched in basic residues. A compositionally biased stretch (low complexity) spans 610–624 (VKNNNNHYNKNNNYN). Positions 632-645 (KNKKNSLSKHKKRK) are enriched in basic residues.

This sequence belongs to the UPF0313 family. It depends on [4Fe-4S] cluster as a cofactor.

The polypeptide is UPF0313 protein CLK_3381 (Clostridium botulinum (strain Loch Maree / Type A3)).